Reading from the N-terminus, the 346-residue chain is Phosphoribosylformylglycinamidine cyclo-ligase (346 aa).

The protein belongs to the AIR synthase family.

It localises to the cytoplasm. The catalysed reaction is 2-formamido-N(1)-(5-O-phospho-beta-D-ribosyl)acetamidine + ATP = 5-amino-1-(5-phospho-beta-D-ribosyl)imidazole + ADP + phosphate + H(+). Its pathway is purine metabolism; IMP biosynthesis via de novo pathway; 5-amino-1-(5-phospho-D-ribosyl)imidazole from N(2)-formyl-N(1)-(5-phospho-D-ribosyl)glycinamide: step 2/2. The protein is Phosphoribosylformylglycinamidine cyclo-ligase of Erwinia tasmaniensis (strain DSM 17950 / CFBP 7177 / CIP 109463 / NCPPB 4357 / Et1/99).